A 377-amino-acid polypeptide reads, in one-letter code: Mechanosensory abnormality protein 6 (377 aa).

Residues 1-13 (MGLQSAAAHFINR) lie on the Cytoplasmic side of the membrane. The helical transmembrane segment at 14–34 (FIIWITIFMVACFLLRLLVVL) threads the bilayer. Residues 35-377 (DLNKRVYNHT…HCDLTHSYIT (343 aa)) lie on the Extracellular side of the membrane. A disulfide bond links C48 and C369. N94 carries an N-linked (GlcNAc...) asparagine glycan.

It belongs to the paraoxonase family. In terms of assembly, component of a non-voltage-gated amiloride-sensitive cation channel complex (also called the degenerin channel complex) composed of at least the mec-2, mec-4, mec-6 and mec-10 subunits; the complex mediates mechanotransduction in touch cells. Interacts with mec-2, mec-4 and mec-10. In terms of processing, glycosylated. As to expression, expressed in neurons including the six touch receptors, ventral cord motor neurons, HSN, PVD, PVC, IL1, and several neurons near the nerve ring, in the anal ganglion and in the male tail sensory rays, in muscles including the body wall, vulval, intestinal, anal depressor and sphincter muscles, and in the excretory canal.

The protein localises to the cell membrane. It localises to the cell projection. It is found in the axon. In terms of biological role, subunit of an amiloride-sensitive cation channel (degenerin channel complex) permeable for sodium, potassium, lithium and N-methylglucamine, and required for mechanosensory transduction (touch sensitivity). Interacts with degenerin channel proteins and stabilizes the channel. Plays a role in mechanosensory transduction (touch sensitivity). This Caenorhabditis elegans protein is Mechanosensory abnormality protein 6.